The following is a 258-amino-acid chain: Acetylglutamate kinase (258 aa).

Substrate contacts are provided by residues 41-42 (GG), arginine 63, and asparagine 156.

The protein belongs to the acetylglutamate kinase family. ArgB subfamily.

It is found in the cytoplasm. The catalysed reaction is N-acetyl-L-glutamate + ATP = N-acetyl-L-glutamyl 5-phosphate + ADP. Its pathway is amino-acid biosynthesis; L-arginine biosynthesis; N(2)-acetyl-L-ornithine from L-glutamate: step 2/4. Functionally, catalyzes the ATP-dependent phosphorylation of N-acetyl-L-glutamate. The protein is Acetylglutamate kinase of Bacillus licheniformis (strain ATCC 14580 / DSM 13 / JCM 2505 / CCUG 7422 / NBRC 12200 / NCIMB 9375 / NCTC 10341 / NRRL NRS-1264 / Gibson 46).